Reading from the N-terminus, the 125-residue chain is MNNDLSIYVSKNSGTAVLLLQGNGTDLTCGSEPMAKIVANTTDAAQEKHVPHITKNGNNIDVSVGSVEHPMTPEHFIEWIILVSGDRLEMAKLTPDMKPRAQFHNVTSGTVYAYCNLHSLWKADI.

Fe cation contacts are provided by His49, His69, His75, Cys115, and His118.

Belongs to the desulfoferrodoxin family. Requires Cu(2+) as cofactor.

It catalyses the reaction reduced [rubredoxin] + superoxide + 2 H(+) = oxidized [rubredoxin] + H2O2. Its function is as follows. Catalyzes the reduction of superoxide to hydrogen peroxide, using electrons from NADH and NADH:rubredoxin oxidoreductase (NROR) and rubredoxin (Rd) as electron transport intermediaries between NADH and Dfx. Is a key factor in the superoxide reductase dependent part of a pathway for detoxification of reactive oxygen species (ROS) in C.acetobutylicum, an obligate anaerobic bacterium. The sequence is that of Desulfoferrodoxin (dfx) from Clostridium acetobutylicum (strain ATCC 824 / DSM 792 / JCM 1419 / IAM 19013 / LMG 5710 / NBRC 13948 / NRRL B-527 / VKM B-1787 / 2291 / W).